The primary structure comprises 367 residues: tRNA 2-selenouridine synthase (367 aa).

A Rhodanese domain is found at 15-138; sequence FLQARPLIDV…LRTFLIQILE (124 aa). Catalysis depends on cysteine 98, which acts as the S-selanylcysteine intermediate.

Belongs to the SelU family. Monomer.

The enzyme catalyses 5-methylaminomethyl-2-thiouridine(34) in tRNA + selenophosphate + (2E)-geranyl diphosphate + H2O + H(+) = 5-methylaminomethyl-2-selenouridine(34) in tRNA + (2E)-thiogeraniol + phosphate + diphosphate. It carries out the reaction 5-methylaminomethyl-2-thiouridine(34) in tRNA + (2E)-geranyl diphosphate = 5-methylaminomethyl-S-(2E)-geranyl-thiouridine(34) in tRNA + diphosphate. It catalyses the reaction 5-methylaminomethyl-S-(2E)-geranyl-thiouridine(34) in tRNA + selenophosphate + H(+) = 5-methylaminomethyl-2-(Se-phospho)selenouridine(34) in tRNA + (2E)-thiogeraniol. The catalysed reaction is 5-methylaminomethyl-2-(Se-phospho)selenouridine(34) in tRNA + H2O = 5-methylaminomethyl-2-selenouridine(34) in tRNA + phosphate. Its function is as follows. Involved in the post-transcriptional modification of the uridine at the wobble position (U34) of tRNA(Lys), tRNA(Glu) and tRNA(Gln). Catalyzes the conversion of 2-thiouridine (S2U-RNA) to 2-selenouridine (Se2U-RNA). Acts in a two-step process involving geranylation of 2-thiouridine (S2U) to S-geranyl-2-thiouridine (geS2U) and subsequent selenation of the latter derivative to 2-selenouridine (Se2U) in the tRNA chain. The protein is tRNA 2-selenouridine synthase of Shewanella denitrificans (strain OS217 / ATCC BAA-1090 / DSM 15013).